We begin with the raw amino-acid sequence, 506 residues long: Exopolysaccharide phosphotransferase NFA_48680 (506 aa).

The segment at 484–506 is disordered; the sequence is PAPWERVSAPSRRPLPESTAGAA.

The protein belongs to the stealth family.

This chain is Exopolysaccharide phosphotransferase NFA_48680, found in Nocardia farcinica (strain IFM 10152).